The primary structure comprises 448 residues: Methylenetetrahydrofolate--tRNA-(uracil-5-)-methyltransferase TrmFO (448 aa).

An FAD-binding site is contributed by 13–18 (GAGLAG).

Belongs to the MnmG family. TrmFO subfamily. Requires FAD as cofactor.

It localises to the cytoplasm. It carries out the reaction uridine(54) in tRNA + (6R)-5,10-methylene-5,6,7,8-tetrahydrofolate + NADH + H(+) = 5-methyluridine(54) in tRNA + (6S)-5,6,7,8-tetrahydrofolate + NAD(+). The catalysed reaction is uridine(54) in tRNA + (6R)-5,10-methylene-5,6,7,8-tetrahydrofolate + NADPH + H(+) = 5-methyluridine(54) in tRNA + (6S)-5,6,7,8-tetrahydrofolate + NADP(+). Its function is as follows. Catalyzes the folate-dependent formation of 5-methyl-uridine at position 54 (M-5-U54) in all tRNAs. The protein is Methylenetetrahydrofolate--tRNA-(uracil-5-)-methyltransferase TrmFO of Streptococcus pyogenes serotype M28 (strain MGAS6180).